A 541-amino-acid polypeptide reads, in one-letter code: Beta-glucuronidase (541 aa).

An N-terminal signal peptide occupies residues 1–20; the sequence is MHHHPITLLSLLLGAAQSIA. N-linked (GlcNAc...) asparagine glycans are attached at residues N69, N115, and N157. The active-site Proton donor is E208. 3 N-linked (GlcNAc...) asparagine glycosylation sites follow: N217, N291, and N304. The active-site Nucleophile is E324. N-linked (GlcNAc...) asparagine glycans are attached at residues N380, N426, N441, N483, and N512.

Belongs to the glycosyl hydrolase 79 family. In terms of processing, N-glycosylated.

It localises to the secreted. The catalysed reaction is a beta-D-glucuronoside + H2O = D-glucuronate + an alcohol. Its function is as follows. Beta-glucuronidase that hydrolyzes beta-glucuronosyl and 4-O-methyl-beta-glucuronosyl residues of arabinogalactan-protein. Hydrolyzed heparan sulfate only very weakly. Has no activity on xylan from birchwood. Able to catalyze the transglycosylation of glucuronic acid (GlcA) residues from p-nitrophenyl-beta-glucuronic acid (PNP beta-GlcA) to various monosaccharide acceptors such as glucose, galactose and xylose. This Aspergillus niger (strain ATCC MYA-4892 / CBS 513.88 / FGSC A1513) protein is Beta-glucuronidase.